The primary structure comprises 207 residues: Large ribosomal subunit protein uL4 (207 aa).

A disordered region spans residues 49–78; that stretch reads HAVKNRSAVSGGGRKPWRQKGTGRARQGSI.

This sequence belongs to the universal ribosomal protein uL4 family. Part of the 50S ribosomal subunit.

Functionally, one of the primary rRNA binding proteins, this protein initially binds near the 5'-end of the 23S rRNA. It is important during the early stages of 50S assembly. It makes multiple contacts with different domains of the 23S rRNA in the assembled 50S subunit and ribosome. In terms of biological role, forms part of the polypeptide exit tunnel. The chain is Large ribosomal subunit protein uL4 from Streptococcus thermophilus (strain CNRZ 1066).